A 98-amino-acid polypeptide reads, in one-letter code: Integration host factor subunit alpha (98 aa).

Positions 49 to 70 (FGNFDLRDKNQRPGRNPKTGED) are disordered.

The protein belongs to the bacterial histone-like protein family. As to quaternary structure, heterodimer of an alpha and a beta chain.

Functionally, this protein is one of the two subunits of integration host factor, a specific DNA-binding protein that functions in genetic recombination as well as in transcriptional and translational control. The sequence is that of Integration host factor subunit alpha from Shewanella baltica (strain OS223).